We begin with the raw amino-acid sequence, 467 residues long: Acyl-CoA-binding domain-containing protein 5 (467 aa).

The ACB domain occupies 8–97 (HQTRFEAAVS…MKKIIETMPV (90 aa)). An acyl-CoA-binding positions include 19-28 (IQSLPKNGSF), 39-43 (YSFYK), K65, and Y84. Disordered regions lie at residues 119-204 (KHGR…IVLN), 219-240 (TPLP…EGEP), and 304-376 (ITEN…DRGP). Residues 125–139 (GVTSELGSVLTSTPN) show a composition bias toward polar residues. The segment covering 170-187 (DEEDEEDETEHSEEEEKE) has biased composition (acidic residues). 2 stretches are compositionally biased toward basic and acidic residues: residues 312 to 322 (ELKDGGEDGKQ) and 335 to 347 (KSEH…ERSL). The segment covering 352–372 (GGEGSRSGQIGSSGDGDGWGS) has biased composition (gly residues). Residues 382 to 411 (EQIAVVLMRLQEDMQNVLQRLHSLEVQTAS) are a coiled coil. Residues 439–459 (GTLALAVVWPFVVHWLMHVFL) traverse the membrane as a helical segment.

The protein belongs to the ATG37 family.

It is found in the peroxisome membrane. Acyl-CoA binding protein which acts as the peroxisome receptor for pexophagy but is dispensable for aggrephagy and nonselective autophagy. Binds medium- and long-chain acyl-CoA esters. In Xenopus laevis (African clawed frog), this protein is Acyl-CoA-binding domain-containing protein 5 (acbd5).